A 228-amino-acid chain; its full sequence is 2,3-bisphosphoglycerate-dependent phosphoglycerate mutase (228 aa).

Substrate is bound by residues 8-15, 21-22, arginine 60, 87-90, lysine 98, 114-115, and 183-184; these read RHGQSEWN, TG, ERHY, RR, and GN. Catalysis depends on histidine 9, which acts as the Tele-phosphohistidine intermediate. Catalysis depends on glutamate 87, which acts as the Proton donor/acceptor.

Belongs to the phosphoglycerate mutase family. BPG-dependent PGAM subfamily.

The catalysed reaction is (2R)-2-phosphoglycerate = (2R)-3-phosphoglycerate. Its pathway is carbohydrate degradation; glycolysis; pyruvate from D-glyceraldehyde 3-phosphate: step 3/5. Catalyzes the interconversion of 2-phosphoglycerate and 3-phosphoglycerate. The protein is 2,3-bisphosphoglycerate-dependent phosphoglycerate mutase of Staphylococcus epidermidis (strain ATCC 12228 / FDA PCI 1200).